Reading from the N-terminus, the 461-residue chain is Serine carboxypeptidase-like 45 (461 aa).

An N-terminal signal peptide occupies residues 1–24 (MSPLQWLTISFALIIFHSLTVSSS). 3 disulfide bridges follow: Cys-86–Cys-340, Cys-243–Cys-261, and Cys-286–Cys-309. Asn-168 carries an N-linked (GlcNAc...) asparagine glycan. Ser-177 is an active-site residue. Asn-244 carries an N-linked (GlcNAc...) asparagine glycan. Active-site residues include Asp-377 and His-434.

This sequence belongs to the peptidase S10 family. Ubiquitous.

Its subcellular location is the secreted. In terms of biological role, probable carboxypeptidase. This chain is Serine carboxypeptidase-like 45 (SCPL45), found in Arabidopsis thaliana (Mouse-ear cress).